The sequence spans 102 residues: Protein YcgL (102 aa).

A YcgL domain is found at methionine 14–leucine 98.

In Salmonella agona (strain SL483), this protein is Protein YcgL.